We begin with the raw amino-acid sequence, 664 residues long: CRISPR-associated DNA-binding protein Cas12m (664 aa).

The segment at 1–137 (MKRVTITIDG…AKYRELIGSD (137 aa)) is recognition domain (REC1-N). The tract at residues 138–212 (EETAQMDTEI…AAKDRIRAAG (75 aa)) is recognition domain (REC2). Residues 213-270 (NDIENLEKDRQAAVIKAYNNSGLWWGNYNAVLESYKKARIKALKDGAELKYHRFDGSG) form a recognition domain (REC1-C) region. Residues 271 to 390 (RFTNQIQGGM…VWSVVFTFTT (120 aa)) form a wedge domain (WED) region. Positions 391–404 (DCPTYDQRSSTGNR) are linker. The ruvC-I stretch occupies residues 405 to 618 (CGLNLGWKKQ…KNGTQIEQVS (214 aa)). A target nucleic-acid binding (TNB) region spans residues 618-650 (STASSATCSACKGKMEQVDGIMWRCRECRALVD). Residues Cys-625, Cys-628, Cys-642, and Cys-645 each coordinate Zn(2+). A ruvC-II region spans residues 651 to 664 (QDINAAANLFREVL). Residue Asp-652 coordinates Mg(2+).

The protein belongs to the CRISPR-associated DNA-binding protein Cas12m family. The cofactor is Mg(2+). Zn(2+) serves as cofactor.

CRISPR (clustered regularly interspaced short palindromic repeat), is an adaptive immune system that provides protection against mobile genetic elements (viruses, transposable elements and conjugative plasmids). CRISPR clusters contain sequences complementary to antecedent mobile elements and target invading nucleic acids. CRISPR clusters are transcribed and processed into CRISPR RNA (crRNA). Recognizes a short motif in the CRISPR repeat sequences (the 5' PAM or protospacer adjacent motif, 5'-CCN-3' in this organism) to help distinguish self versus nonself, as targets within the bacterial CRISPR locus do not have PAMs. Cas12m-crRNA binds DNA in a PAM-dependent, crRNA-guided fashion. DNA-binding probably inhibits transcription, leading to gene silencing. Upon expression in E.coli as a CRISPR region preferentially binds to its associated crRNA. Probably required for pre-crRNA processing to mature crRNA. This chain is CRISPR-associated DNA-binding protein Cas12m, found in Pelobacter propionicus (strain DSM 2379 / NBRC 103807 / OttBd1).